A 445-amino-acid chain; its full sequence is Potassium/proton antiporter CemA (445 aa).

Helical transmembrane passes span 44 to 64 (MQVS…VNIC), 330 to 350 (ALTC…ILIL), 368 to 388 (LIII…GWKL), and 405 to 425 (FILC…KYWI).

The protein belongs to the CemA family.

The protein localises to the plastid. Its subcellular location is the chloroplast inner membrane. It catalyses the reaction K(+)(in) + H(+)(out) = K(+)(out) + H(+)(in). Contributes to K(+)/H(+) antiport activity by supporting proton efflux to control proton extrusion and homeostasis in chloroplasts in a light-dependent manner to modulate photosynthesis. Prevents excessive induction of non-photochemical quenching (NPQ) under continuous-light conditions. Indirectly promotes efficient inorganic carbon uptake into chloroplasts. The protein is Potassium/proton antiporter CemA of Pleurastrum terricola (Filamentous green alga).